Reading from the N-terminus, the 85-residue chain is Putative regulatory protein DICTH_1339 (85 aa).

The protein belongs to the RemA family.

The chain is Putative regulatory protein DICTH_1339 from Dictyoglomus thermophilum (strain ATCC 35947 / DSM 3960 / H-6-12).